The following is a 160-amino-acid chain: MNTPLPPGLAQIWVDADACPAVIRDILFRAAQRTGIPVTLVANHFLRTPTLAHVRALQVPGGPDAADDAIAERVNAGDLVVTQDIPLAARVLERGAAAVSPRGEPFSSDSIAERLSVRGFLEELRGAGVATGGPPALHARDRQAFAAQLDRWLARQSARS.

Belongs to the UPF0178 family.

In Xanthomonas campestris pv. campestris (strain 8004), this protein is UPF0178 protein XC_1827.